The following is a 668-amino-acid chain: Transketolase 1 (668 aa).

His26 contributes to the substrate binding site. Thiamine diphosphate-binding positions include His66 and 114-116 (GPL). Asp155 contacts Mg(2+). Thiamine diphosphate is bound by residues Gly156 and Asn185. Residues Asn185 and Ile187 each contribute to the Mg(2+) site. Positions 261, 358, and 385 each coordinate substrate. His261 is a thiamine diphosphate binding site. Glu413 (proton donor) is an active-site residue. Phe439 serves as a coordination point for thiamine diphosphate. 3 residues coordinate substrate: His463, Asp471, and Arg522.

It belongs to the transketolase family. As to quaternary structure, homodimer. Mg(2+) is required as a cofactor. Ca(2+) serves as cofactor. Requires Mn(2+) as cofactor. The cofactor is Co(2+). It depends on thiamine diphosphate as a cofactor.

It catalyses the reaction D-sedoheptulose 7-phosphate + D-glyceraldehyde 3-phosphate = aldehydo-D-ribose 5-phosphate + D-xylulose 5-phosphate. Its function is as follows. Catalyzes the transfer of a two-carbon ketol group from a ketose donor to an aldose acceptor, via a covalent intermediate with the cofactor thiamine pyrophosphate. The sequence is that of Transketolase 1 (tktA) from Pasteurella multocida (strain Pm70).